A 398-amino-acid chain; its full sequence is Serpin-Z2B (398 aa).

The tract at residues 343–367 (GTEAAATTIAKVVLRQAPPPSVLDF) is RCL.

This sequence belongs to the serpin family.

Functionally, inhibits chymotrypsin, cathepsin G and trypsin in vitro. This chain is Serpin-Z2B, found in Triticum aestivum (Wheat).